The chain runs to 977 residues: Disks large-associated protein 3 (977 aa).

A compositionally biased stretch (basic and acidic residues) spans 1–10; that stretch reads MRGYHGDRGS. 6 disordered regions span residues 1–30, 52–90, 137–167, 181–289, 398–417, and 529–582; these read MRGYHGDRGSHPRPARFADQQHMDVGPAAR, AGLGHLSPEGPLSLSEGPSSVGPEGGPGGVGAGGSSSTF, FHTLPYQRGPAGPGPGPGSGAAPEARSESPS, AKSH…CLDA, AMGDEESGDSDGSPKTSPKA, and PGSS…SADG. A compositionally biased stretch (low complexity) spans 53–73; the sequence is GLGHLSPEGPLSLSEGPSSVG. Serine 58 is subject to Phosphoserine. A compositionally biased stretch (gly residues) spans 74–85; the sequence is PEGGPGGVGAGG. Positions 189–201 are enriched in basic and acidic residues; the sequence is PGKRDYNGPKAEG. The segment covering 202–212 has biased composition (low complexity); sequence RSSSGGDSYSG. The segment covering 221–245 has biased composition (basic residues); sequence SHHHHHHHHHHHHQSRHGKRSKSKD. The segment covering 258-271 has biased composition (low complexity); it reads GWWSSDDNLDSDSG. A phosphoserine mark is found at serine 404, serine 407, serine 410, and serine 414. The segment covering 538–547 has biased composition (pro residues); it reads APPPIPPGSQ. Serine 641 and serine 643 each carry phosphoserine. 2 disordered regions span residues 739 to 788 and 906 to 939; these read EGYP…RTSP and EEKKVPPPIPKKPSRGRGVPVKERSLDSVDRQRQ. Residues 754–763 show a composition bias toward pro residues; that stretch reads PGPPPVPAPG. 2 stretches are compositionally biased toward basic and acidic residues: residues 767-777 and 925-939; these read GRRDSWMERGS and PVKERSLDSVDRQRQ. Serine 930, serine 933, and serine 965 each carry phosphoserine.

It belongs to the SAPAP family. Interacts with DLG1 and DLG4/PSD-95. As to expression, expressed in most brain regions.

It localises to the cell membrane. The protein localises to the postsynaptic density. It is found in the synapse. In terms of biological role, may play a role in the molecular organization of synapses and neuronal cell signaling. Could be an adapter protein linking ion channel to the subsynaptic cytoskeleton. May induce enrichment of PSD-95/SAP90 at the plasma membrane. The sequence is that of Disks large-associated protein 3 (Dlgap3) from Rattus norvegicus (Rat).